Here is a 186-residue protein sequence, read N- to C-terminus: UPF0397 protein LBUL_1584 (186 aa).

The next 5 helical transmembrane spans lie at 13 to 33 (IAAL…ASIP), 46 to 66 (AFLA…VGFI), 79 to 99 (TWWN…LYAL), 114 to 134 (VIFN…LGSV), and 150 to 170 (QAGL…TILL).

Belongs to the UPF0397 family.

It localises to the cell membrane. This chain is UPF0397 protein LBUL_1584, found in Lactobacillus delbrueckii subsp. bulgaricus (strain ATCC BAA-365 / Lb-18).